An 848-amino-acid chain; its full sequence is MTPGKHSGASARAANGGAWGYRDFRGGQKKGWCTTPQLVATMPVSPAGSHKQQNFGLNNATQPKKSISFFATMKATSVKGYTGANQSRMAVSKTVLIPPELKTVEKPNPNIKTTQVFDINGTDVTPRPLYHPDPLTGTAKPSKLLTSQEGSLGSEFISSYSLYQNTINPSTLGQFTRSVLGSSTVSKSSVSASESIAEDLEEPSYKRERLTSFTDLQVIRAAPEKIVTKEDLEKNIEIILTETETLRFFDLPTVMVSVESEEAEKVTQRNKNYEVLCRNRLGNDLYVERMMQTFNGAPKNKDVQCDKIIMEDKGIMSTAWDLYDSYNAMELVSLSVKQSVVESSSKANVLPKDQDQRLPGSTTEKNSETSSLMDIENVILAKIHEDEEDHSDAILKSDKFHQDLFFMERVLMENIFQPKLAAYRQLPVLKEPEPEEPEDVLESAKHEEVEEESKKEEEEEIHAEESTIPANLERLWSFSCDLTKGLNVSSLAWNKTNPDLLAVGYGHFGFKEQKRGLACCWSIKNPMWPERIYQSPYGVTAVDFSIGAPNLLAVGYHNGTIAIYNVRSNSNVPVLDSSESPQKHLGPVWQLQWIEQDRGTTGDGKREILVSISADGRISKWVIRKGLDCYDLMRLKRTTAASNKKGGEKEKKDEALISRQAPGMCFAFHPKDTNIYLAGTEEGHIHKCSCSYNEQYLDTYRGHKGPVYKVTWNPFCHDVFLSCSADWGVIIWQQENVKPSLSFYPATSVVYDVAWSPKSSYIFAAANENRVEIWDLHISTLDPLIVNTANPGIKFTTILFAKQTDCLLVGDSDGQVSVYELRNMPTVLETGRGDIMDTLLGSKSNQSA.

Disordered regions lie at residues 345–370 (SKANVLPKDQDQRLPGSTTEKNSETS) and 431–464 (EPEPEEPEDVLESAKHEEVEEESKKEEEEEIHAE). Positions 359 to 370 (PGSTTEKNSETS) are enriched in polar residues. The segment covering 442–456 (ESAKHEEVEEESKKE) has biased composition (basic and acidic residues). 6 WD repeats span residues 534–574 (QSPY…NVPV), 583–631 (KHLG…DCYD), 658–698 (SRQA…QYLD), 702–742 (GHKG…PSLS), 745–784 (PATSVVYDVAWSPKSSYIFAAANENRVEIWDLHISTLDPL), and 790–829 (NPGIKFTTILFAKQTDCLLVGDSDGQVSVYELRNMPTVLE).

As to quaternary structure, part of the multisubunit axonemal dynein complex formed at least of two heavy chains and a number of intermediate and light chains. Associated with axonemal dynein subunits such as, DNAH2, DNAI3, and DYNLT1. Interacts with DYNLT1.

It localises to the cytoplasm. Its subcellular location is the cytoskeleton. The protein localises to the flagellum axoneme. The protein resides in the cilium axoneme. It is found in the dynein axonemal particle. Its function is as follows. Plays a critical role in the assembly of axonemal dynein complex, thereby playing a role in ciliary motility. The protein is Dynein axonemal intermediate chain 4 of Homo sapiens (Human).